The sequence spans 33 residues: Beta-amanitin proprotein (33 aa).

Residues Met1–Pro10 constitute a propeptide that is removed on maturation. The segment at residues Ile11–Pro18 is a cross-link (cyclopeptide (Ile-Pro)). A cross-link (2'-cysteinyl-6'-hydroxytryptophan sulfoxide (Trp-Cys)) is located at residues Trp12–Cys16. Residues Cys19–Ala33 constitute a propeptide that is removed on maturation.

The protein belongs to the MSDIN fungal toxin family. Post-translationally, processed by the macrocyclase-peptidase enzyme POPB to yield a toxic cyclic decapeptide. POPB first removes 10 residues from the N-terminus. Conformational trapping of the remaining peptide forces the enzyme to release this intermediate rather than proceed to macrocyclization. The enzyme rebinds the remaining peptide in a different conformation and catalyzes macrocyclization of the N-terminal 8 residues.

Functionally, toxin belonging to the bicyclic octapeptides amatoxins that acts by binding non-competitively to RNA polymerase II and greatly slowing the elongation of transcripts from target promoters. This chain is Beta-amanitin proprotein, found in Amanita pallidorosea.